The chain runs to 183 residues: dCTP deaminase, dUMP-forming (183 aa).

Residues 99 to 104, D117, 125 to 127, Q146, Y159, K166, and Q170 contribute to the dCTP site; these read KSSIAR and TLE. The active-site Proton donor/acceptor is E127.

The protein belongs to the dCTP deaminase family. In terms of assembly, homotrimer.

It catalyses the reaction dCTP + 2 H2O = dUMP + NH4(+) + diphosphate. The protein operates within pyrimidine metabolism; dUMP biosynthesis; dUMP from dCTP: step 1/1. In terms of biological role, bifunctional enzyme that catalyzes both the deamination of dCTP to dUTP and the hydrolysis of dUTP to dUMP without releasing the toxic dUTP intermediate. This Methanoregula boonei (strain DSM 21154 / JCM 14090 / 6A8) protein is dCTP deaminase, dUMP-forming.